We begin with the raw amino-acid sequence, 627 residues long: Altered inheritance of mitochondria protein 9, mitochondrial (627 aa).

The N-terminal 43 residues, 1 to 43 (MIRYTVAGHSRRCVVGASKRVGAIKCITVAATKRFISNKPNEV), are a transit peptide targeting the mitochondrion.

It belongs to the AIM9 family.

The protein localises to the mitochondrion. This chain is Altered inheritance of mitochondria protein 9, mitochondrial (AIM9), found in Saccharomyces cerevisiae (strain ATCC 204508 / S288c) (Baker's yeast).